A 103-amino-acid polypeptide reads, in one-letter code: High-potential iron-sulfur protein (103 aa).

The N-terminal stretch at 1–28 (MSNRRLFLKSIPIMAAAGAVGMAGLARA) is a signal peptide. [4Fe-4S] cluster contacts are provided by Cys66, Cys69, Cys82, and Cys96.

The protein belongs to the high-potential iron-sulfur protein (HiPIP) family. Homodimer.

The protein localises to the periplasm. In terms of biological role, specific class of high-redox-potential 4Fe-4S ferredoxins. Functions in anaerobic electron transport in most purple and in some other photosynthetic bacteria and in at least one genus (Paracoccus) of halophilic, denitrifying bacteria. This Ralstonia nicotianae (strain ATCC BAA-1114 / GMI1000) (Ralstonia solanacearum) protein is High-potential iron-sulfur protein (hip).